Reading from the N-terminus, the 123-residue chain is Small ribosomal subunit protein uS12 (123 aa).

Asp-89 carries the post-translational modification 3-methylthioaspartic acid.

The protein belongs to the universal ribosomal protein uS12 family. As to quaternary structure, part of the 30S ribosomal subunit. Contacts proteins S8 and S17. May interact with IF1 in the 30S initiation complex.

With S4 and S5 plays an important role in translational accuracy. In terms of biological role, interacts with and stabilizes bases of the 16S rRNA that are involved in tRNA selection in the A site and with the mRNA backbone. Located at the interface of the 30S and 50S subunits, it traverses the body of the 30S subunit contacting proteins on the other side and probably holding the rRNA structure together. The combined cluster of proteins S8, S12 and S17 appears to hold together the shoulder and platform of the 30S subunit. This is Small ribosomal subunit protein uS12 from Granulibacter bethesdensis (strain ATCC BAA-1260 / CGDNIH1).